A 119-amino-acid chain; its full sequence is UPF0102 protein Nther_1376 (119 aa).

The protein belongs to the UPF0102 family.

This is UPF0102 protein Nther_1376 from Natranaerobius thermophilus (strain ATCC BAA-1301 / DSM 18059 / JW/NM-WN-LF).